A 232-amino-acid chain; its full sequence is Putative homeobox protein NANOG2 (232 aa).

Residues 1–39 (MDLPIQDSHDSSTSPKGKQPTTAEKSATKKEDKVPVKKQ) form a disordered region. A compositionally biased stretch (polar residues) spans 11-25 (SSTSPKGKQPTTAEK). A compositionally biased stretch (basic and acidic residues) spans 26–35 (SATKKEDKVP). A run of 8 repeats spans residues 123 to 127 (WSNQT), 128 to 132 (WNNST), 133 to 137 (WSNQT), 143 to 147 (WSNHS), 148 to 152 (WNTQT), 153 to 157 (WCTQS), 158 to 162 (WNNQA), and 163 to 167 (WNSPF). Residues 123–167 (WSNQTWNNSTWSNQTQNIQSWSNHSWNTQTWCTQSWNNQAWNSPF) are 8 X repeats starting with a Trp in each unit. The tract at residues 123-167 (WSNQTWNNSTWSNQTQNIQSWSNHSWNTQTWCTQSWNNQAWNSPF) is sufficient for transactivation activity. Positions 168–232 (YNCGEESLQS…YSMNMQPEDV (65 aa)) are sufficient for strong transactivation activity.

The protein belongs to the Nanog homeobox family.

It localises to the nucleus. In terms of biological role, probable transcriptional regulator. This is Putative homeobox protein NANOG2 (NANOGP1) from Homo sapiens (Human).